The primary structure comprises 467 residues: Tripartite motif-containing protein 75 (467 aa).

The RING-type zinc-finger motif lies at 16 to 57; it reads CPICLDDLTDPVTVECGHNFCRSCIKDFWAGQQATSSCPVCR. The segment at 90-131 adopts a B box-type zinc-finger fold; sequence ESSTSCERHNQALTLFCEDDLQLLCDQCVEPESHGRHQVLSI. Residues C95, H98, C117, and H123 each contribute to the Zn(2+) site. Positions 168-222 form a coiled coil; the sequence is VTLREQAEAQRSQLTSECEKLMRFLDQEERAAFSRLEDEEMRLEKRLLDNIAALE. Positions 276–466 constitute a B30.2/SPRY domain; that stretch reads YSFPLQYSAL…LRLCSATDSE (191 aa).

It belongs to the TRIM/RBCC family.

It is found in the cytoplasm. It localises to the cytoskeleton. Its subcellular location is the spindle. Functionally, may play a role in female meiosis. The sequence is that of Tripartite motif-containing protein 75 from Mus musculus (Mouse).